Here is a 157-residue protein sequence, read N- to C-terminus: D-aminoacyl-tRNA deacylase (157 aa).

Positions 137–138 (GP) match the Gly-cisPro motif, important for rejection of L-amino acids motif.

The protein belongs to the DTD family. As to quaternary structure, homodimer.

The protein localises to the cytoplasm. The catalysed reaction is glycyl-tRNA(Ala) + H2O = tRNA(Ala) + glycine + H(+). It catalyses the reaction a D-aminoacyl-tRNA + H2O = a tRNA + a D-alpha-amino acid + H(+). An aminoacyl-tRNA editing enzyme that deacylates mischarged D-aminoacyl-tRNAs. Also deacylates mischarged glycyl-tRNA(Ala), protecting cells against glycine mischarging by AlaRS. Acts via tRNA-based rather than protein-based catalysis; rejects L-amino acids rather than detecting D-amino acids in the active site. By recycling D-aminoacyl-tRNA to D-amino acids and free tRNA molecules, this enzyme counteracts the toxicity associated with the formation of D-aminoacyl-tRNA entities in vivo and helps enforce protein L-homochirality. The protein is D-aminoacyl-tRNA deacylase of Roseiflexus castenholzii (strain DSM 13941 / HLO8).